The chain runs to 176 residues: Nucleoside triphosphate/diphosphate phosphatase (176 aa).

Arg-23 (proton donor) is an active-site residue. Residues Asn-87, Asp-103, Asp-105, Asp-107, Asp-120, and Glu-123 each coordinate Mg(2+).

This sequence belongs to the Ntdp family. Mg(2+) is required as a cofactor.

The catalysed reaction is a ribonucleoside 5'-triphosphate + H2O = a ribonucleoside 5'-diphosphate + phosphate + H(+). It catalyses the reaction a ribonucleoside 5'-diphosphate + H2O = a ribonucleoside 5'-phosphate + phosphate + H(+). Has nucleoside phosphatase activity towards nucleoside triphosphates and nucleoside diphosphates. This chain is Nucleoside triphosphate/diphosphate phosphatase, found in Bacillus cereus (strain G9842).